The chain runs to 182 residues: Isopentenyl-diphosphate Delta-isomerase (182 aa).

H25 and H32 together coordinate Mn(2+). The region spanning 30–164 (LLHLAFSSWL…PWAFSPWMVM (135 aa)) is the Nudix hydrolase domain. The active site involves C67. Position 67 (C67) interacts with Mg(2+). Position 69 (H69) interacts with Mn(2+). A Mg(2+)-binding site is contributed by E87. Residues E114 and E116 each contribute to the Mn(2+) site. E116 is an active-site residue.

This sequence belongs to the IPP isomerase type 1 family. Homodimer. The cofactor is Mg(2+). Mn(2+) serves as cofactor.

Its subcellular location is the cytoplasm. It carries out the reaction isopentenyl diphosphate = dimethylallyl diphosphate. Its pathway is isoprenoid biosynthesis; dimethylallyl diphosphate biosynthesis; dimethylallyl diphosphate from isopentenyl diphosphate: step 1/1. Catalyzes the 1,3-allylic rearrangement of the homoallylic substrate isopentenyl (IPP) to its highly electrophilic allylic isomer, dimethylallyl diphosphate (DMAPP). This chain is Isopentenyl-diphosphate Delta-isomerase, found in Escherichia coli O6:H1 (strain CFT073 / ATCC 700928 / UPEC).